The chain runs to 184 residues: Probable RNA 2'-phosphotransferase (184 aa).

The protein belongs to the KptA/TPT1 family.

Its function is as follows. Removes the 2'-phosphate from RNA via an intermediate in which the phosphate is ADP-ribosylated by NAD followed by a presumed transesterification to release the RNA and generate ADP-ribose 1''-2''-cyclic phosphate (APPR&gt;P). May function as an ADP-ribosylase. The protein is Probable RNA 2'-phosphotransferase of Shigella boydii serotype 18 (strain CDC 3083-94 / BS512).